The primary structure comprises 56 residues: PI-stichotoxin-Hcr2n (56 aa).

In terms of domain architecture, BPTI/Kunitz inhibitor spans 4 to 54 (CLEPKKVGRCRGSFPRFYFDSETGKCTPFIYGGCGGNGNNFETLHACRAIC). 3 cysteine pairs are disulfide-bonded: Cys-4-Cys-54, Cys-13-Cys-37, and Cys-29-Cys-50.

This sequence belongs to the venom Kunitz-type family. Sea anemone type 2 potassium channel toxin subfamily.

The protein localises to the secreted. Its subcellular location is the nematocyst. This recombinant serine protease inhibitor inhibits trypsin (Ki=30 nM). It possesses anti-inflammatory activity in vitro. It blocks histamine influence on intracellular calcium concentration in murine bone marrow-derived macrophages (62.2% inhibition at 10 uM), which can indicate inhibition of H1-histamine receptor (HRH1). In contrast to some paralogs, this protein decreases reactive oxygen species (ROS) level in the oxidative stress agent 6-hydroxydopamine (6-OHDA)-induced neurotoxicity model, but does not show cytoprotective activity on neuroblastoma cells. In vivo, it shows analgesic activity, since it increases hot plate and tail flick withdrawal latencies, when using a mice thermal pain stimulation model. The chain is PI-stichotoxin-Hcr2n from Radianthus crispa (Leathery sea anemone).